Consider the following 340-residue polypeptide: MGELTAFLLPLIIVLMVKHSNSRTHSLRYFRLGVSDPIHGVPEFISVGYVDSHPITTYDSVTQQKEPRAPWMAENLAPDHWERYTQLLRGWQQMFKVELKRLQRHYNHSGSHTYQRMIGCELLEDGSTTGFLQYAYDGQDFLIFNKDTLSWLAVDNVAHTIKRAWEANQHELQYQKNWLEEECIAWLKRFLEYGKDTLQRTEPPLVRVNRKETFPGVTTLFCKAHGFYPPEIYMTWMKNGEEIVQEMDYGDILPSGDGTYQTWASVELDPQSSNLYSCHVEHCGVHVVLQVPQESEAIPLVMKAVSGSIVFVIVLAGVGVLVWRRRPREQNGAVYLPTPD.

The signal sequence occupies residues 1 to 22 (MGELTAFLLPLIIVLMVKHSNS). The tract at residues 23-109 (RTHSLRYFRL…KRLQRHYNHS (87 aa)) is alpha-1. Positions 23 to 201 (RTHSLRYFRL…EYGKDTLQRT (179 aa)) are antigen-binding cleft. Residues 23–302 (RTHSLRYFRL…QESEAIPLVM (280 aa)) lie on the Extracellular side of the membrane. Residues Tyr-29 and Arg-31 each contribute to the 8-(9H-purin-6-yl)-2-oxa-8-azabicyclo[3.3.1]nona-3,6-diene-4,6-dicarbaldehyde site. 5-(2-oxoethylideneamino)-6-(D-ribitylamino)uracil-binding residues include Arg-31, Ser-46, and Lys-65. 5-(2-oxopropylideneamino)-6-(D-ribitylamino)uracil is bound by residues Arg-31, Ser-46, and Lys-65. 7-hydroxy-6-methyl-8-(1-D-ribityl)lumazine is bound by residues Arg-31, Ser-46, and Lys-65. The 8-(9H-purin-6-yl)-2-oxa-8-azabicyclo[3.3.1]nona-3,6-diene-4,6-dicarbaldehyde site is built by Lys-65 and His-80. Lys-65 lines the 2-amino-4-oxopteridine-6-carbaldehyde pocket. Lys-65 contacts pyridoxal. Residue Asn-107 is glycosylated (N-linked (GlcNAc...) asparagine). The interval 110 to 201 (GSHTYQRMIG…EYGKDTLQRT (92 aa)) is alpha-2. Arg-116 serves as a coordination point for 8-(9H-purin-6-yl)-2-oxa-8-azabicyclo[3.3.1]nona-3,6-diene-4,6-dicarbaldehyde. The 5-(2-oxoethylideneamino)-6-(D-ribitylamino)uracil site is built by Arg-116, Tyr-174, and Gln-175. 5-(2-oxopropylideneamino)-6-(D-ribitylamino)uracil contacts are provided by Arg-116, Tyr-174, and Gln-175. 3 residues coordinate 7-hydroxy-6-methyl-8-(1-D-ribityl)lumazine: Arg-116, Tyr-174, and Gln-175. 2 cysteine pairs are disulfide-bonded: Cys-120/Cys-183 and Cys-222/Cys-278. The alpha-3 stretch occupies residues 202-293 (EPPLVRVNRK…GVHVVLQVPQ (92 aa)). One can recognise an Ig-like C1-type domain in the interval 203–282 (PPLVRVNRKE…SNLYSCHVEH (80 aa)). Residues 294–302 (ESEAIPLVM) form a connecting peptide region. A helical membrane pass occupies residues 303–323 (KAVSGSIVFVIVLAGVGVLVW). Residues 324 to 340 (RRRPREQNGAVYLPTPD) are Cytoplasmic-facing.

The protein belongs to the MHC class I family. As to quaternary structure, heterotrimer that consists of MR1, B2M and metabolite antigen. Major classes of metabolite ligands presented by MR1 include riboflavin-related antigens, pyrimidines and ribityl lumazines, nucleobase adducts and folate derivatives. Forms reversible covalent Schiff base complexes with microbial pyrimidine-based metabolite, which serves as a molecular switch triggering complete folding, stable association with B2M and translocation of the ternary complex from endoplasmic reticulum to the plasma membrane. Alternatively, forms non-Schiff base complexes with ribityl lumazines. On antigen-presenting cells, the ternary complex interacts with TCR on MR1-restricted T cells. Interacts with TAPBP and TAPBPL chaperones in the endoplasmic reticulum. TAPBP associated or not with MHC class I peptide loading complex binds ligand-free MR1 or MR1-B2M complex, providing for stable MR1 pools ready for metabolite antigen processing. TAPBPL interacts with MR1 in a ligand-independent way; this interaction may stabilize MR1 pool and facilitate ligand loading and dissociation. Structurally, MR1-B2M heterodimer adopts a topology similar to classical MHC class I molecules, with alpha-1 and alpha-2 domains of MR1 forming the antigen-binding cleft composed of two alpha-helices resting on a floor of 7-stranded anti-parallel beta-pleated sheet. MR1-B2M heterodimer (via alpha-helices) interacts with TCR (via CDR domains). N-glycosylated.

It is found in the cell membrane. Its subcellular location is the endoplasmic reticulum membrane. The protein localises to the golgi apparatus membrane. The protein resides in the early endosome membrane. It localises to the late endosome membrane. Antigen-presenting molecule specialized in displaying microbial pyrimidine-based metabolites to alpha-beta T cell receptors (TCR) on innate-type mucosal-associated invariant T (MAIT) cells. In complex with B2M preferentially presents riboflavin-derived metabolites to semi-invariant TCRs on MAIT cells, guiding immune surveillance of the microbial metabolome at mucosal epithelial barriers. Signature pyrimidine-based microbial antigens are generated via non-enzymatic condensation of metabolite intermediates of the riboflavin pathway with by-products arising from other metabolic pathways such as glycolysis. Typical potent antigenic metabolites are 5-(2-oxoethylideneamino)-6-D-ribitylaminouracil (5-OE-RU) and 5-(2-oxopropylideneamino)-6-D-ribitylaminouracil (5-OP-RU), products of condensation of 5-amino-6-D-ribityaminouracil (5-A-RU) with glyoxal or methylglyoxal by-products, respectively. May present microbial antigens to various MAIT cell subsets, providing for unique recognition of diverse microbes, including pathogens that do not synthesize riboflavin. Upon antigen recognition, elicits rapid innate-type MAIT cell activation to eliminate pathogenic microbes by directly killing infected cells. During T cell development, drives thymic selection and post-thymic terminal differentiation of MAIT cells in a process dependent on commensal microflora. Acts as an immune sensor of cancer cell metabolome. May present a tumor-specific or -associated metabolite essential for cancer cell survival to a pan-cancer TCR on a non-MAIT CD8-positive T cell clone, triggering T cell-mediated killing of a wide range of cancer cell types. May present tumor-enriched pyridoxal and pyridoxal 5'-phosphate antigens, enabling preferential recognition of cancer cells. Presents nucleobase carbonyl adducts generated during oxidative stress. Captures M3Ade, a nucleobase adduct composed of one adenine modified by a malondialdehyde trimer, for recognition by MR1-restricted T cell clones expressing a polyclonal TCR repertoire. The protein is Major histocompatibility complex class I-related protein 1 of Pongo abelii (Sumatran orangutan).